We begin with the raw amino-acid sequence, 113 residues long: Prefoldin subunit beta (113 aa).

This sequence belongs to the prefoldin subunit beta family. Heterohexamer of two alpha and four beta subunits.

Its subcellular location is the cytoplasm. Its function is as follows. Molecular chaperone capable of stabilizing a range of proteins. Seems to fulfill an ATP-independent, HSP70-like function in archaeal de novo protein folding. This Methanocaldococcus jannaschii (strain ATCC 43067 / DSM 2661 / JAL-1 / JCM 10045 / NBRC 100440) (Methanococcus jannaschii) protein is Prefoldin subunit beta (pfdB).